The primary structure comprises 1381 residues: MKAPAVLAPGILVLLFTLVQKSKGECKEALVKSTMNLNMQYQLPNFTAETPIQNVVLHKHHIYLGALNYIYVLNDIDLRKVAEYKTGPVLEHPDCFPCQDCSHKANLSGGIWRDNINMALLVDTYYDDQLISCGSVHRGTCQRHVLPPDNIADIKSEVHCMYSPQVDEEPSQCPDCVVSALGTKVLLSEKDRFINFFVGNTINSSYLPDHSLHSISVRRLKETQDGFKFLTDQSYIDVLPEFRDSYPIKYVHAFESNHFIYFLTVQRETLDAQTFHTRIIRFCSVDSGLHSYMEMPLECILTEKRRKRSTREEVFNILQAAYVSKPGTQLAKQIGANLNDDILYGVFAQSKPDSAEPMNRSAVCAFPVKYVNEFFNKIVNKNNVRCLQHFYGPNHEHCFNRTLLRNSSGCEVRSDEYRTEFTTALQRIDLFMGQFNQVLLTSISTFIKGDLTIANLGTSEGRFMQVVVSRPGLSTPHVNFHLDSHPVSPEVIVEPLNQNGYTLVVTGKKITKIPLNGLGCEHFQSCSQCLSAPPFVQCGWCQDKCVQLEECPSGTWTQEICLPTVYKVFPTSAPLEGGTTLTICGWDFGFRRNNKFDLRKTKVLLGNESCTLTLSESTTNTLKCTVGPAMNEHFNMSIVISNGRGTTQYRTFSYVDPVITNISPSFGPKTGGTLLTLTGMHLNSGNSRHISIGGKTCTLKSVSDSILECYTPAQTTPTEFPIKLKIDLANREINSFTYREDPIVYEIHPTKSFISGGSTITGVGRNLNSVSVLRMVINVHEAERNFTVACQHRSNSEIICCTTPSLQQLNLQLPLKTKAFFMLDGIHSKYFDLIYVHNPVFKPFEKPVMISIGNENVLEIKGNDIDPEAVKGEVLKVGNKSCENIHSHSEAVLCTVPNDLLKLNSELNIEWKQAISSTVLGKVIVQPDQNFTGLIVGVVSISIILLLLLGLFLWLKKRKQIKDLGSELVRYDARVHTPHLDRLVSARSVSPTTEMVSSEPVDYRATFPEDQFPNSSQNGSCRQVQYPLTDLSPILTSGDSDISSPLLQNTVHIDLSALNPELVQAVQHVVIGPSSLIVHFNEVIGRGHFGCVYHGTLLDNDDKKIHCAVKSLNRITDIGEVSQFLTEGIIMKDFSHPNVLSLLGICLRSEGSPLVVLPYMKHGDLRNFIRNETHNPTVKDLIGFGLQVAKGMKYLASKKFVHRDLAARNCMLDEKFTVKVADFGLARDVYDKEYYSVHNKTGAKLPVKWMALESLQTQKFTTKSDVWSFGVLLWELMTRGAPPYPDVNTFDITVYLLQGRRLLQPEYCPDPLYEVMLKCWHPRAELRPSFSELVSRISAIFSTFIGEHYVHVNATYVNVKCVAPYPSLLSSQDNVDGEGDT.

The N-terminal stretch at 1–24 (MKAPAVLAPGILVLLFTLVQKSKG) is a signal peptide. Over 25–932 (ECKEALVKST…VIVQPDQNFT (908 aa)) the chain is Extracellular. Residues 27–515 (KEALVKSTMN…TGKKITKIPL (489 aa)) enclose the Sema domain. The N-linked (GlcNAc...) asparagine glycan is linked to Asn-45. Disulfide bonds link Cys-95–Cys-101, Cys-98–Cys-160, Cys-133–Cys-141, and Cys-173–Cys-176. N-linked (GlcNAc...) asparagine glycosylation occurs at Asn-106. N-linked (GlcNAc...) asparagine glycans are attached at residues Asn-203 and Asn-359. Disulfide bonds link Cys-299–Cys-364 and Cys-386–Cys-398. N-linked (GlcNAc...) asparagine glycans are attached at residues Asn-400 and Asn-406. 4 disulfides stabilise this stretch: Cys-520/Cys-538, Cys-526/Cys-561, Cys-529/Cys-545, and Cys-541/Cys-551. IPT/TIG domains lie at 563-655 (PTVY…FSYV), 657-739 (PVIT…FTYR), and 742-836 (PIVY…LIYV). Residue Thr-582 is glycosylated (O-linked (Man) threonine). Residues Asn-607 and Asn-635 are each glycosylated (N-linked (GlcNAc...) asparagine). 2 O-linked (Man) threonine glycosylation sites follow: Thr-676 and Thr-761. N-linked (GlcNAc...) asparagine glycosylation is found at Asn-785, Asn-879, and Asn-930. Residues 933–955 (GLIVGVVSISIILLLLLGLFLWL) form a helical membrane-spanning segment. At 956–1381 (KKRKQIKDLG…QDNVDGEGDT (426 aa)) the chain is on the cytoplasmic side. Phosphoserine is present on Ser-966. Thr-977 carries the phosphothreonine modification. Residues Ser-990 and Ser-997 each carry the phosphoserine modification. Position 1003 is a phosphotyrosine (Tyr-1003). A Protein kinase domain is found at 1078 to 1345 (VHFNEVIGRG…RISAIFSTFI (268 aa)). Residues 1084-1092 (IGRGHFGCV) and Lys-1110 each bind ATP. The active-site Proton acceptor is the Asp-1204. The interaction with RANBP9 stretch occupies residues 1212 to 1381 (LDEKFTVKVA…QDNVDGEGDT (170 aa)). A Phosphotyrosine modification is found at Tyr-1230. A phosphotyrosine; by autocatalysis mark is found at Tyr-1234 and Tyr-1235. Thr-1289 is modified (phosphothreonine). Positions 1320-1359 (WHPRAELRPSFSELVSRISAIFSTFIGEHYVHVNATYVNV) are interaction with MUC20. Phosphotyrosine; by autocatalysis is present on residues Tyr-1349 and Tyr-1356. At Tyr-1365 the chain carries Phosphotyrosine.

The protein belongs to the protein kinase superfamily. Tyr protein kinase family. As to quaternary structure, heterodimer made of an alpha chain (50 kDa) and a beta chain (145 kDa) which are disulfide linked. Binds PLXNB1. Interacts when phosphorylated with downstream effectors including STAT3, PIK3R1, SRC, PCLG1, GRB2 and GAB1. Interacts with SPSB1, SPSB2 and SPSB4. Interacts with INPP5D/SHIP1. When phosphorylated at Tyr-1356, interacts with INPPL1/SHIP2. Interacts with RANBP9 and RANBP10, as well as SPSB1, SPSB2, SPSB3 and SPSB4. SPSB1 binding occurs in the presence and in the absence of HGF, however HGF treatment has a positive effect on this interaction. Interacts with MUC20; prevents interaction with GRB2 and suppresses hepatocyte growth factor-induced cell proliferation. Interacts with GRB10. Interacts with PTPN1 and PTPN2. Interacts with HSP90AA1 and HSP90AB1; the interaction suppresses MET kinase activity. Interacts with tensin TNS3. Interacts (when phosphorylated) with tensin TNS4 (via SH2 domain); the interaction increases MET protein stability by inhibiting MET endocytosis and subsequent lysosomal degradation. Autophosphorylated in response to ligand binding on Tyr-1234 and Tyr-1235 in the kinase domain leading to further phosphorylation of Tyr-1349 and Tyr-1356 in the C-terminal multifunctional docking site. Dephosphorylated by PTPRJ at Tyr-1349 and Tyr-1365. Dephosphorylated by PTPN1 and PTPN2. Post-translationally, ubiquitinated. Ubiquitination by CBL regulates the receptor stability and activity through proteasomal degradation. In terms of processing, O-mannosylation of IPT/TIG domains by TMEM260 is required for protein maturation. O-mannosylated residues are composed of single mannose glycans that are not elongated or modified.

Its subcellular location is the membrane. The enzyme catalyses L-tyrosyl-[protein] + ATP = O-phospho-L-tyrosyl-[protein] + ADP + H(+). In its inactive state, the C-terminal tail interacts with the catalytic domain and inhibits the kinase activity. Upon ligand binding, the C-terminal tail is displaced and becomes phosphorylated, thus increasing the kinase activity. Receptor tyrosine kinase that transduces signals from the extracellular matrix into the cytoplasm by binding to hepatocyte growth factor/HGF ligand. Regulates many physiological processes including proliferation, scattering, morphogenesis and survival. Ligand binding at the cell surface induces autophosphorylation of MET on its intracellular domain that provides docking sites for downstream signaling molecules. Following activation by ligand, interacts with the PI3-kinase subunit PIK3R1, PLCG1, SRC, GRB2, STAT3 or the adapter GAB1. Recruitment of these downstream effectors by MET leads to the activation of several signaling cascades including the RAS-ERK, PI3 kinase-AKT, or PLCgamma-PKC. The RAS-ERK activation is associated with the morphogenetic effects while PI3K/AKT coordinates prosurvival effects. During embryonic development, MET signaling plays a role in gastrulation, development and migration of muscles and neuronal precursors, angiogenesis and kidney formation. In adults, participates in wound healing as well as organ regeneration and tissue remodeling. Also promotes differentiation and proliferation of hematopoietic cells. The chain is Hepatocyte growth factor receptor (MET) from Sus scrofa (Pig).